We begin with the raw amino-acid sequence, 228 residues long: Small ribosomal subunit protein uS3 (228 aa).

Residues 39-107 enclose the KH type-2 domain; the sequence is IRKELNEKLK…PVNINIEEIK (69 aa).

This sequence belongs to the universal ribosomal protein uS3 family. Part of the 30S ribosomal subunit. Forms a tight complex with proteins S10 and S14.

Functionally, binds the lower part of the 30S subunit head. Binds mRNA in the 70S ribosome, positioning it for translation. The sequence is that of Small ribosomal subunit protein uS3 from Hydrogenovibrio crunogenus (strain DSM 25203 / XCL-2) (Thiomicrospira crunogena).